A 253-amino-acid chain; its full sequence is uncharacterized protein (253 aa).

10-34 provides a ligand contact to NADP(+); sequence LVTGASSGLGRGLALWLARRGVRVF. Position 142 (serine 142) interacts with substrate. Catalysis depends on tyrosine 155, which acts as the Proton acceptor.

The protein belongs to the short-chain dehydrogenases/reductases (SDR) family.

This is an uncharacterized protein from Myxococcus xanthus (strain DK1622).